A 400-amino-acid polypeptide reads, in one-letter code: Dual-specificity RNA methyltransferase RlmN (400 aa).

The active-site Proton acceptor is Glu125. The 242-residue stretch at Glu131 to Leu372 folds into the Radical SAM core domain. Cys138 and Cys375 are oxidised to a cystine. Residues Cys145, Cys149, and Cys152 each coordinate [4Fe-4S] cluster. Residues Gly201–Glu202, Ser233, Ser255–His257, and Asn332 each bind S-adenosyl-L-methionine. Cys375 functions as the S-methylcysteine intermediate in the catalytic mechanism.

It belongs to the radical SAM superfamily. RlmN family. The cofactor is [4Fe-4S] cluster.

It is found in the cytoplasm. The enzyme catalyses adenosine(2503) in 23S rRNA + 2 reduced [2Fe-2S]-[ferredoxin] + 2 S-adenosyl-L-methionine = 2-methyladenosine(2503) in 23S rRNA + 5'-deoxyadenosine + L-methionine + 2 oxidized [2Fe-2S]-[ferredoxin] + S-adenosyl-L-homocysteine. It carries out the reaction adenosine(37) in tRNA + 2 reduced [2Fe-2S]-[ferredoxin] + 2 S-adenosyl-L-methionine = 2-methyladenosine(37) in tRNA + 5'-deoxyadenosine + L-methionine + 2 oxidized [2Fe-2S]-[ferredoxin] + S-adenosyl-L-homocysteine. Specifically methylates position 2 of adenine 2503 in 23S rRNA and position 2 of adenine 37 in tRNAs. m2A2503 modification seems to play a crucial role in the proofreading step occurring at the peptidyl transferase center and thus would serve to optimize ribosomal fidelity. This is Dual-specificity RNA methyltransferase RlmN from Bradyrhizobium diazoefficiens (strain JCM 10833 / BCRC 13528 / IAM 13628 / NBRC 14792 / USDA 110).